The following is a 280-amino-acid chain: Eukaryotic translation initiation factor 3 subunit F-1 (280 aa).

The MPN domain maps to 8-138 (VRVHPVVLFQ…LRAYVCIQLG (131 aa)).

This sequence belongs to the eIF-3 subunit F family. Component of the eukaryotic translation initiation factor 3 (eIF-3) complex. The eIF-3 complex interacts with pix.

Its subcellular location is the cytoplasm. In terms of biological role, component of the eukaryotic translation initiation factor 3 (eIF-3) complex, which is involved in protein synthesis of a specialized repertoire of mRNAs and, together with other initiation factors, stimulates binding of mRNA and methionyl-tRNAi to the 40S ribosome. The eIF-3 complex specifically targets and initiates translation of a subset of mRNAs involved in cell proliferation. This chain is Eukaryotic translation initiation factor 3 subunit F-1, found in Drosophila erecta (Fruit fly).